The following is a 317-amino-acid chain: UV DNA damage endonuclease (317 aa).

The protein belongs to the uve1/UvsE family.

In terms of biological role, component in a DNA repair pathway. Removal of UV LIGHT damaged nucleotides. Recognizes pyrimidine dimers and cleave a phosphodiester bond immediately 5' to the lesion. This Bacillus cereus (strain B4264) protein is UV DNA damage endonuclease.